A 1377-amino-acid chain; its full sequence is DNA-directed RNA polymerase subunit beta (1377 aa).

It belongs to the RNA polymerase beta chain family. In terms of assembly, the RNAP catalytic core consists of 2 alpha, 1 beta, 1 beta' and 1 omega subunit. When a sigma factor is associated with the core the holoenzyme is formed, which can initiate transcription.

It carries out the reaction RNA(n) + a ribonucleoside 5'-triphosphate = RNA(n+1) + diphosphate. In terms of biological role, DNA-dependent RNA polymerase catalyzes the transcription of DNA into RNA using the four ribonucleoside triphosphates as substrates. The chain is DNA-directed RNA polymerase subunit beta from Cereibacter sphaeroides (strain ATCC 17029 / ATH 2.4.9) (Rhodobacter sphaeroides).